Consider the following 371-residue polypeptide: UDP-N-acetylglucosamine--N-acetylmuramyl-(pentapeptide) pyrophosphoryl-undecaprenol N-acetylglucosamine transferase (371 aa).

UDP-N-acetyl-alpha-D-glucosamine is bound by residues threonine 15–glycine 17, asparagine 126, arginine 172, serine 199, isoleucine 256, alanine 275–glutamate 280, and glutamine 301.

It belongs to the glycosyltransferase 28 family. MurG subfamily.

The protein resides in the cell inner membrane. The catalysed reaction is di-trans,octa-cis-undecaprenyl diphospho-N-acetyl-alpha-D-muramoyl-L-alanyl-D-glutamyl-meso-2,6-diaminopimeloyl-D-alanyl-D-alanine + UDP-N-acetyl-alpha-D-glucosamine = di-trans,octa-cis-undecaprenyl diphospho-[N-acetyl-alpha-D-glucosaminyl-(1-&gt;4)]-N-acetyl-alpha-D-muramoyl-L-alanyl-D-glutamyl-meso-2,6-diaminopimeloyl-D-alanyl-D-alanine + UDP + H(+). Its pathway is cell wall biogenesis; peptidoglycan biosynthesis. Cell wall formation. Catalyzes the transfer of a GlcNAc subunit on undecaprenyl-pyrophosphoryl-MurNAc-pentapeptide (lipid intermediate I) to form undecaprenyl-pyrophosphoryl-MurNAc-(pentapeptide)GlcNAc (lipid intermediate II). This is UDP-N-acetylglucosamine--N-acetylmuramyl-(pentapeptide) pyrophosphoryl-undecaprenol N-acetylglucosamine transferase from Francisella tularensis subsp. tularensis (strain WY96-3418).